The following is a 61-amino-acid chain: Truncated 3-beta hydroxy-5-ene steroid dehydrogenase homolog (61 aa).

This sequence belongs to the 3-beta-HSD family.

The protein is Truncated 3-beta hydroxy-5-ene steroid dehydrogenase homolog of Variola virus (isolate Human/India/Ind3/1967) (VARV).